A 682-amino-acid polypeptide reads, in one-letter code: Potassium-transporting ATPase ATP-binding subunit (682 aa).

The next 4 membrane-spanning stretches (helical) occupy residues 35-55 (VMFV…AMAA), 62-82 (TGFT…ANFA), 219-239 (IALT…TVTL), and 254-274 (VLVA…LSAI). The active-site 4-aspartylphosphate intermediate is the aspartate 307. Residues aspartate 344, glutamate 348, 377–384 (FSAQTRMS), and lysine 395 each bind ATP. Aspartate 518 and aspartate 522 together coordinate Mg(2+). The next 3 helical transmembrane spans lie at 577–597 (TFSI…AFAA), 616–636 (AILS…PLAL), and 656–676 (IYGV…DMLL).

The protein belongs to the cation transport ATPase (P-type) (TC 3.A.3) family. Type IA subfamily. The system is composed of three essential subunits: KdpA, KdpB and KdpC.

It is found in the cell inner membrane. The catalysed reaction is K(+)(out) + ATP + H2O = K(+)(in) + ADP + phosphate + H(+). Part of the high-affinity ATP-driven potassium transport (or Kdp) system, which catalyzes the hydrolysis of ATP coupled with the electrogenic transport of potassium into the cytoplasm. This subunit is responsible for energy coupling to the transport system and for the release of the potassium ions to the cytoplasm. The sequence is that of Potassium-transporting ATPase ATP-binding subunit from Erwinia tasmaniensis (strain DSM 17950 / CFBP 7177 / CIP 109463 / NCPPB 4357 / Et1/99).